The chain runs to 288 residues: Phosphatidylserine decarboxylase proenzyme (288 aa).

Catalysis depends on charge relay system; for autoendoproteolytic cleavage activity residues Asp-88, His-145, and Ser-248. The active-site Schiff-base intermediate with substrate; via pyruvic acid; for decarboxylase activity is Ser-248. Ser-248 carries the pyruvic acid (Ser); by autocatalysis modification.

It belongs to the phosphatidylserine decarboxylase family. PSD-B subfamily. Prokaryotic type I sub-subfamily. Heterodimer of a large membrane-associated beta subunit and a small pyruvoyl-containing alpha subunit. Pyruvate is required as a cofactor. Post-translationally, is synthesized initially as an inactive proenzyme. Formation of the active enzyme involves a self-maturation process in which the active site pyruvoyl group is generated from an internal serine residue via an autocatalytic post-translational modification. Two non-identical subunits are generated from the proenzyme in this reaction, and the pyruvate is formed at the N-terminus of the alpha chain, which is derived from the carboxyl end of the proenzyme. The autoendoproteolytic cleavage occurs by a canonical serine protease mechanism, in which the side chain hydroxyl group of the serine supplies its oxygen atom to form the C-terminus of the beta chain, while the remainder of the serine residue undergoes an oxidative deamination to produce ammonia and the pyruvoyl prosthetic group on the alpha chain. During this reaction, the Ser that is part of the protease active site of the proenzyme becomes the pyruvoyl prosthetic group, which constitutes an essential element of the active site of the mature decarboxylase.

It is found in the cell membrane. The enzyme catalyses a 1,2-diacyl-sn-glycero-3-phospho-L-serine + H(+) = a 1,2-diacyl-sn-glycero-3-phosphoethanolamine + CO2. It participates in phospholipid metabolism; phosphatidylethanolamine biosynthesis; phosphatidylethanolamine from CDP-diacylglycerol: step 2/2. In terms of biological role, catalyzes the formation of phosphatidylethanolamine (PtdEtn) from phosphatidylserine (PtdSer). This is Phosphatidylserine decarboxylase proenzyme from Azoarcus sp. (strain BH72).